Consider the following 237-residue polypeptide: MANPYFQFKKFTVWHDKCAMKVGTDGVLLGAWASTERCQRILDVGTGTGLIALMLAQRSTAILDAIDIDSDACLQAQENIAKSPFANRIQVYQTSLSEYMPDENIKYDLIVSNPPYFIDSLKCPDTKRNLARHTDTLSLPDLLRDSRKLLAPEGNIALVLPFEQRESLIDIAREESLSPSREAHVSPIPDAPPKRLLIELSATPVAKPKSSHLTLEIERHRYSEEFTAIAKDFYLKM.

This sequence belongs to the methyltransferase superfamily. tRNA (adenine-N(6)-)-methyltransferase family.

The protein resides in the cytoplasm. It catalyses the reaction adenosine(37) in tRNA1(Val) + S-adenosyl-L-methionine = N(6)-methyladenosine(37) in tRNA1(Val) + S-adenosyl-L-homocysteine + H(+). Its function is as follows. Specifically methylates the adenine in position 37 of tRNA(1)(Val) (anticodon cmo5UAC). This is tRNA1(Val) (adenine(37)-N6)-methyltransferase from Parabacteroides distasonis (strain ATCC 8503 / DSM 20701 / CIP 104284 / JCM 5825 / NCTC 11152).